The sequence spans 309 residues: Porphobilinogen deaminase (309 aa).

C244 carries the post-translational modification S-(dipyrrolylmethanemethyl)cysteine.

It belongs to the HMBS family. As to quaternary structure, monomer. Dipyrromethane is required as a cofactor.

The catalysed reaction is 4 porphobilinogen + H2O = hydroxymethylbilane + 4 NH4(+). The protein operates within porphyrin-containing compound metabolism; protoporphyrin-IX biosynthesis; coproporphyrinogen-III from 5-aminolevulinate: step 2/4. In terms of biological role, tetrapolymerization of the monopyrrole PBG into the hydroxymethylbilane pre-uroporphyrinogen in several discrete steps. The protein is Porphobilinogen deaminase of Listeria monocytogenes serovar 1/2a (strain ATCC BAA-679 / EGD-e).